Consider the following 583-residue polypeptide: Ras-specific guanine nucleotide-releasing factor RalGPS2 (583 aa).

One can recognise a Ras-GEF domain in the interval 49–287 (TPEEYAGQIT…YKLSLKIEPG (239 aa)). Residues 283-314 (KIEPGTSTPRSAASREDLVGPEVGASPQSGRK) form a disordered region. A phosphoserine mark is found at S293, S296, S308, and S311. Residues 324-327 (PQTP) carry the PXXP motif. Phosphothreonine is present on T326. Phosphoserine is present on residues S329 and S343. T361 carries the phosphothreonine modification. The disordered stretch occupies residues 372 to 406 (DDSVMEPHAPSRGQAESSTLSSGISIGSSDGSELS). S374 carries the phosphoserine modification. Positions 387 to 403 (ESSTLSSGISIGSSDGS) are enriched in low complexity. A Phosphoserine modification is found at S422. The region spanning 457–569 (AVTIQGVLRR…WFKHLSAACQ (113 aa)) is the PH domain. The tract at residues 459-583 (TIQGVLRRKT…QVPTNLMTFE (125 aa)) is required for stimulation of nucleotide exchange by RALA.

Interacts with the SH3 domains of GRB2 and PLCG1. Interacts with RALA.

It is found in the cytoplasm. Its subcellular location is the cell membrane. Guanine nucleotide exchange factor for the small GTPase RALA. May be involved in cytoskeletal organization. May also be involved in the stimulation of transcription in a Ras-independent fashion. This chain is Ras-specific guanine nucleotide-releasing factor RalGPS2 (RALGPS2), found in Homo sapiens (Human).